The sequence spans 114 residues: Large ribosomal subunit protein bL20c (114 aa).

It belongs to the bacterial ribosomal protein bL20 family.

It is found in the plastid. The protein localises to the chloroplast. Its function is as follows. Binds directly to 23S ribosomal RNA and is necessary for the in vitro assembly process of the 50S ribosomal subunit. It is not involved in the protein synthesizing functions of that subunit. This chain is Large ribosomal subunit protein bL20c (rpl20), found in Trieres chinensis (Marine centric diatom).